The primary structure comprises 222 residues: N-(5'-phosphoribosyl)anthranilate isomerase (222 aa).

The protein belongs to the TrpF family.

The catalysed reaction is N-(5-phospho-beta-D-ribosyl)anthranilate = 1-(2-carboxyphenylamino)-1-deoxy-D-ribulose 5-phosphate. It participates in amino-acid biosynthesis; L-tryptophan biosynthesis; L-tryptophan from chorismate: step 3/5. This Rhizobium etli (strain CIAT 652) protein is N-(5'-phosphoribosyl)anthranilate isomerase.